Reading from the N-terminus, the 98-residue chain is Large ribosomal subunit protein bL28 (98 aa).

This sequence belongs to the bacterial ribosomal protein bL28 family.

This is Large ribosomal subunit protein bL28 from Beijerinckia indica subsp. indica (strain ATCC 9039 / DSM 1715 / NCIMB 8712).